The sequence spans 131 residues: Small ribosomal subunit protein bS16 (131 aa).

Positions 87–117 (IGKSKQEELRKSEAKTSAKNKKANEEKANEE) are enriched in basic and acidic residues. Residues 87-131 (IGKSKQEELRKSEAKTSAKNKKANEEKANEEKVEESETLEASSEA) form a disordered region.

The protein belongs to the bacterial ribosomal protein bS16 family.

The sequence is that of Small ribosomal subunit protein bS16 from Prochlorococcus marinus (strain SARG / CCMP1375 / SS120).